A 432-amino-acid polypeptide reads, in one-letter code: Tryptophan--tRNA ligase, cytoplasmic (432 aa).

The 'HIGH' region signature appears at 111 to 120; that stretch reads PSSDSMHLGH. Positions 295–299 match the 'KMSKS' region motif; that stretch reads KMSAS.

This sequence belongs to the class-I aminoacyl-tRNA synthetase family. In terms of assembly, homodimer.

It is found in the cytoplasm. It carries out the reaction tRNA(Trp) + L-tryptophan + ATP = L-tryptophyl-tRNA(Trp) + AMP + diphosphate + H(+). This chain is Tryptophan--tRNA ligase, cytoplasmic (WRS1), found in Saccharomyces cerevisiae (strain ATCC 204508 / S288c) (Baker's yeast).